Here is a 263-residue protein sequence, read N- to C-terminus: Sulfur carrier protein FdhD (263 aa).

Residue Cys-107 is the Cysteine persulfide intermediate of the active site.

Belongs to the FdhD family.

It is found in the cytoplasm. Required for formate dehydrogenase (FDH) activity. Acts as a sulfur carrier protein that transfers sulfur from IscS to the molybdenum cofactor prior to its insertion into FDH. The sequence is that of Sulfur carrier protein FdhD from Bacillus licheniformis (strain ATCC 14580 / DSM 13 / JCM 2505 / CCUG 7422 / NBRC 12200 / NCIMB 9375 / NCTC 10341 / NRRL NRS-1264 / Gibson 46).